We begin with the raw amino-acid sequence, 185 residues long: Ribosome-recycling factor (185 aa).

The protein belongs to the RRF family.

It is found in the cytoplasm. In terms of biological role, responsible for the release of ribosomes from messenger RNA at the termination of protein biosynthesis. May increase the efficiency of translation by recycling ribosomes from one round of translation to another. The polypeptide is Ribosome-recycling factor (Shewanella halifaxensis (strain HAW-EB4)).